A 486-amino-acid polypeptide reads, in one-letter code: Protein nucleotidyltransferase YdiU (486 aa).

ATP is bound by residues glycine 90, glycine 92, arginine 93, lysine 113, aspartate 125, glycine 126, arginine 176, and arginine 183. Residue aspartate 252 is the Proton acceptor of the active site. Asparagine 253 and aspartate 262 together coordinate Mg(2+). Aspartate 262 serves as a coordination point for ATP.

The protein belongs to the SELO family. Mg(2+) serves as cofactor. Requires Mn(2+) as cofactor.

It carries out the reaction L-seryl-[protein] + ATP = 3-O-(5'-adenylyl)-L-seryl-[protein] + diphosphate. It catalyses the reaction L-threonyl-[protein] + ATP = 3-O-(5'-adenylyl)-L-threonyl-[protein] + diphosphate. The enzyme catalyses L-tyrosyl-[protein] + ATP = O-(5'-adenylyl)-L-tyrosyl-[protein] + diphosphate. The catalysed reaction is L-histidyl-[protein] + UTP = N(tele)-(5'-uridylyl)-L-histidyl-[protein] + diphosphate. It carries out the reaction L-seryl-[protein] + UTP = O-(5'-uridylyl)-L-seryl-[protein] + diphosphate. It catalyses the reaction L-tyrosyl-[protein] + UTP = O-(5'-uridylyl)-L-tyrosyl-[protein] + diphosphate. Functionally, nucleotidyltransferase involved in the post-translational modification of proteins. It can catalyze the addition of adenosine monophosphate (AMP) or uridine monophosphate (UMP) to a protein, resulting in modifications known as AMPylation and UMPylation. The sequence is that of Protein nucleotidyltransferase YdiU from Pseudomonas putida (strain GB-1).